Here is a 582-residue protein sequence, read N- to C-terminus: ATP-dependent lipid A-core flippase (582 aa).

A run of 5 helical transmembrane segments spans residues 16–36 (LWPTIAPFKAGLIVAGIALIL), 64–84 (LLWMPLVVIGLMILRGITSYI), 153–173 (IIGLFIMMFYYSWQLSIILVV), 253–273 (PIIQLIASLALAFVLYAASFP), and 275–295 (VMDSLTAGTITVVFSSMIALM). An ABC transmembrane type-1 domain is found at 28–310 (IVAGIALILN…LTNVNAQFQR (283 aa)). In terms of domain architecture, ABC transporter spans 342 to 578 (LEFRNVTFTY…HGVYAQLHKM (237 aa)). 376 to 383 (GRSGSGKS) is an ATP binding site.

Belongs to the ABC transporter superfamily. Lipid exporter (TC 3.A.1.106) family. Homodimer.

It localises to the cell inner membrane. It catalyses the reaction ATP + H2O + lipid A-core oligosaccharideSide 1 = ADP + phosphate + lipid A-core oligosaccharideSide 2.. Functionally, involved in lipopolysaccharide (LPS) biosynthesis. Translocates lipid A-core from the inner to the outer leaflet of the inner membrane. Transmembrane domains (TMD) form a pore in the inner membrane and the ATP-binding domain (NBD) is responsible for energy generation. The polypeptide is ATP-dependent lipid A-core flippase (Salmonella choleraesuis (strain SC-B67)).